A 206-amino-acid chain; its full sequence is MRPLTPRQAEILELIKRNIADTGMPPTRAEIARRLGFKSANAAEEHLKALAKKGCIEIMPGTSRGIKLTQESTEEPDLGLPLIGQVAAGEPILAQEHVEQHYKVDPAMFRPSADFLLRVRGDSMKNIGILEGDLLAVHKIEQARNGQIVVARVEDDVTVKRFEKKGNKVFLHAENEDYSPIEVDLANQSLSIEGLAVGVIRNGDWQ.

Residues 28–48 (RAEIARRLGFKSANAAEEHLK) constitute a DNA-binding region (H-T-H motif). Active-site for autocatalytic cleavage activity residues include Ser-123 and Lys-160.

Belongs to the peptidase S24 family. As to quaternary structure, homodimer.

It carries out the reaction Hydrolysis of Ala-|-Gly bond in repressor LexA.. Functionally, represses a number of genes involved in the response to DNA damage (SOS response), including recA and lexA. In the presence of single-stranded DNA, RecA interacts with LexA causing an autocatalytic cleavage which disrupts the DNA-binding part of LexA, leading to derepression of the SOS regulon and eventually DNA repair. The protein is LexA repressor of Shewanella pealeana (strain ATCC 700345 / ANG-SQ1).